We begin with the raw amino-acid sequence, 211 residues long: ATP phosphoribosyltransferase (211 aa).

Belongs to the ATP phosphoribosyltransferase family. Short subfamily. Heteromultimer composed of HisG and HisZ subunits.

The protein localises to the cytoplasm. The catalysed reaction is 1-(5-phospho-beta-D-ribosyl)-ATP + diphosphate = 5-phospho-alpha-D-ribose 1-diphosphate + ATP. It functions in the pathway amino-acid biosynthesis; L-histidine biosynthesis; L-histidine from 5-phospho-alpha-D-ribose 1-diphosphate: step 1/9. Functionally, catalyzes the condensation of ATP and 5-phosphoribose 1-diphosphate to form N'-(5'-phosphoribosyl)-ATP (PR-ATP). Has a crucial role in the pathway because the rate of histidine biosynthesis seems to be controlled primarily by regulation of HisG enzymatic activity. The protein is ATP phosphoribosyltransferase of Bacillus cereus (strain B4264).